Here is a 285-residue protein sequence, read N- to C-terminus: MGDSRETFGPKAFVTGFPIKHSRSPLIHGYWLKTLGLPGSYRAHEVAPEAFADFIASLKDGSSGFAGGNVTIPHKELAFRLADRPDALSQELGASNTLWLEDDLLHATNTDGRGFTANLDERHPGWDRHDTAVIFGAGGASRAIIQAVRDRGFKTIHVVNRTVGRARELADRFGPKVHAHPAGALAEVMKGAGLFINTTSLGMDGEAAPQLDFTPLTADAVVTDIVYVPLKTPLLAQAQEQGFPIVDGLGMLLHQAVPGFEKWFGKRPVVDAALRALIIADMEAH.

Residues 22-24 and Thr-71 contribute to the shikimate site; that span reads SRS. The Proton acceptor role is filled by Lys-75. 2 residues coordinate shikimate: Asn-96 and Asp-111. NADP(+) contacts are provided by residues 136 to 140, 160 to 165, and Ile-225; these read GAGGA and NRTVGR. Position 227 (Tyr-227) interacts with shikimate. Gly-248 provides a ligand contact to NADP(+).

It belongs to the shikimate dehydrogenase family. As to quaternary structure, homodimer.

It carries out the reaction shikimate + NADP(+) = 3-dehydroshikimate + NADPH + H(+). It participates in metabolic intermediate biosynthesis; chorismate biosynthesis; chorismate from D-erythrose 4-phosphate and phosphoenolpyruvate: step 4/7. Its function is as follows. Involved in the biosynthesis of the chorismate, which leads to the biosynthesis of aromatic amino acids. Catalyzes the reversible NADPH linked reduction of 3-dehydroshikimate (DHSA) to yield shikimate (SA). The chain is Shikimate dehydrogenase (NADP(+)) from Rhizobium etli (strain CIAT 652).